Consider the following 283-residue polypeptide: Polyamine aminopropyltransferase (283 aa).

The region spanning 2 to 237 (ELWYTDQHTK…GHWLFGFASK (236 aa)) is the PABS domain. Residue glutamine 31 coordinates S-methyl-5'-thioadenosine. Histidine 62 and aspartate 86 together coordinate spermidine. S-methyl-5'-thioadenosine-binding positions include glutamate 106 and 137 to 138 (EG). Catalysis depends on aspartate 155, which acts as the Proton acceptor. Spermidine is bound at residue 155–158 (DCAD). An S-methyl-5'-thioadenosine-binding site is contributed by proline 162.

This sequence belongs to the spermidine/spermine synthase family. In terms of assembly, homodimer or homotetramer.

It localises to the cytoplasm. The catalysed reaction is S-adenosyl 3-(methylsulfanyl)propylamine + putrescine = S-methyl-5'-thioadenosine + spermidine + H(+). The protein operates within amine and polyamine biosynthesis; spermidine biosynthesis; spermidine from putrescine: step 1/1. In terms of biological role, catalyzes the irreversible transfer of a propylamine group from the amino donor S-adenosylmethioninamine (decarboxy-AdoMet) to putrescine (1,4-diaminobutane) to yield spermidine. This is Polyamine aminopropyltransferase from Lachnoclostridium phytofermentans (strain ATCC 700394 / DSM 18823 / ISDg) (Clostridium phytofermentans).